Consider the following 220-residue polypeptide: MKYIKIYILRNKKFKNQNINFLKIKPFNCPNYNFFGNEIRRSLLLNIKKTMTITNIKFFISKSKSKHPKKLKIFHPVNEFFDIEEIKENLSNICINLKKLRFKFNPKNNKEKKTFIILNSFNKKSFSAKDIIIPSTSNLKIVNLKEHLFNKISQKINLKVLIKIENNENYFYNPIKRINFILEKNNNIGKYIILDLNSDININPFKAFIESLKYLNLNNT.

It belongs to the RNA polymerase alpha chain family. As to quaternary structure, in plastids the minimal PEP RNA polymerase catalytic core is composed of four subunits: alpha, beta, beta', and beta''. When a (nuclear-encoded) sigma factor is associated with the core the holoenzyme is formed, which can initiate transcription.

The protein localises to the plastid. The catalysed reaction is RNA(n) + a ribonucleoside 5'-triphosphate = RNA(n+1) + diphosphate. DNA-dependent RNA polymerase catalyzes the transcription of DNA into RNA using the four ribonucleoside triphosphates as substrates. The polypeptide is DNA-directed RNA polymerase subunit alpha (rpoA) (Euglena longa (Euglenophycean alga)).